The following is a 316-amino-acid chain: Pantothenate kinase (316 aa).

95–102 (GSVAVGKS) contributes to the ATP binding site.

It belongs to the prokaryotic pantothenate kinase family.

It is found in the cytoplasm. It carries out the reaction (R)-pantothenate + ATP = (R)-4'-phosphopantothenate + ADP + H(+). It participates in cofactor biosynthesis; coenzyme A biosynthesis; CoA from (R)-pantothenate: step 1/5. The polypeptide is Pantothenate kinase (Erwinia tasmaniensis (strain DSM 17950 / CFBP 7177 / CIP 109463 / NCPPB 4357 / Et1/99)).